A 712-amino-acid chain; its full sequence is Polyribonucleotide nucleotidyltransferase (712 aa).

Mg(2+)-binding residues include aspartate 487 and aspartate 493. In terms of domain architecture, KH spans 554–613 (PRIEVMNIPVDKIREVIGSGGKVIREIVEKTGAKINIEDDGTVKIASSSGKEIEAARKWI). Residues 623-691 (GQIYEGTVVK…ERGKVRLSMK (69 aa)) enclose the S1 motif domain.

This sequence belongs to the polyribonucleotide nucleotidyltransferase family. Mg(2+) is required as a cofactor.

It is found in the cytoplasm. It carries out the reaction RNA(n+1) + phosphate = RNA(n) + a ribonucleoside 5'-diphosphate. In terms of biological role, involved in mRNA degradation. Catalyzes the phosphorolysis of single-stranded polyribonucleotides processively in the 3'- to 5'-direction. This is Polyribonucleotide nucleotidyltransferase from Rhizobium etli (strain ATCC 51251 / DSM 11541 / JCM 21823 / NBRC 15573 / CFN 42).